The chain runs to 523 residues: Probable glucose-1-phosphate adenylyltransferase large subunit, chloroplastic (523 aa).

It belongs to the bacterial/plant glucose-1-phosphate adenylyltransferase family. In terms of assembly, heterotetramer.

It is found in the plastid. The protein resides in the chloroplast. The enzyme catalyses alpha-D-glucose 1-phosphate + ATP + H(+) = ADP-alpha-D-glucose + diphosphate. It functions in the pathway glycan biosynthesis; starch biosynthesis. Activated by 3'phosphoglycerate, inhibited by orthophosphate. Allosteric regulation. Functionally, this protein plays a role in synthesis of starch. It catalyzes the synthesis of the activated glycosyl donor, ADP-glucose from Glc-1-P and ATP. This Arabidopsis thaliana (Mouse-ear cress) protein is Probable glucose-1-phosphate adenylyltransferase large subunit, chloroplastic.